Consider the following 368-residue polypeptide: Peptide chain release factor 2 (368 aa).

A disordered region spans residues 36 to 56 (EAQAGDPSLWDDPDHAQKVTS). The residue at position 250 (Q250) is an N5-methylglutamine.

The protein belongs to the prokaryotic/mitochondrial release factor family. Post-translationally, methylated by PrmC. Methylation increases the termination efficiency of RF2.

It localises to the cytoplasm. In terms of biological role, peptide chain release factor 2 directs the termination of translation in response to the peptide chain termination codons UGA and UAA. The sequence is that of Peptide chain release factor 2 from Corynebacterium aurimucosum (strain ATCC 700975 / DSM 44827 / CIP 107346 / CN-1) (Corynebacterium nigricans).